Reading from the N-terminus, the 357-residue chain is Protein RecA (357 aa).

78 to 85 (GPESSGKT) is a binding site for ATP.

It belongs to the RecA family.

Its subcellular location is the cytoplasm. Its function is as follows. Can catalyze the hydrolysis of ATP in the presence of single-stranded DNA, the ATP-dependent uptake of single-stranded DNA by duplex DNA, and the ATP-dependent hybridization of homologous single-stranded DNAs. It interacts with LexA causing its activation and leading to its autocatalytic cleavage. This chain is Protein RecA, found in Cereibacter sphaeroides (strain ATCC 17029 / ATH 2.4.9) (Rhodobacter sphaeroides).